Here is a 94-residue protein sequence, read N- to C-terminus: ESAT-6-like protein EsxN (94 aa).

Belongs to the WXG100 family. ESAT-6 subfamily.

The protein localises to the secreted. This chain is ESAT-6-like protein EsxN, found in Mycobacterium bovis (strain ATCC BAA-935 / AF2122/97).